The primary structure comprises 120 residues: Small ribosomal subunit protein uS13m (120 aa).

The protein belongs to the universal ribosomal protein uS13 family. In terms of assembly, part of the small ribosomal subunit.

The protein resides in the mitochondrion. In terms of biological role, located at the top of the head of the small subunit, it contacts several helices of the 18S rRNA. The chain is Small ribosomal subunit protein uS13m (RPS13) from Marchantia polymorpha (Common liverwort).